Reading from the N-terminus, the 117-residue chain is Photosystem II reaction center Psb28 protein (117 aa).

It belongs to the Psb28 family. Part of the photosystem II complex.

Its subcellular location is the cellular thylakoid membrane. This chain is Photosystem II reaction center Psb28 protein, found in Prochlorococcus marinus subsp. pastoris (strain CCMP1986 / NIES-2087 / MED4).